A 417-amino-acid chain; its full sequence is Gamma-glutamyl phosphate reductase (417 aa).

Belongs to the gamma-glutamyl phosphate reductase family.

It localises to the cytoplasm. The enzyme catalyses L-glutamate 5-semialdehyde + phosphate + NADP(+) = L-glutamyl 5-phosphate + NADPH + H(+). It participates in amino-acid biosynthesis; L-proline biosynthesis; L-glutamate 5-semialdehyde from L-glutamate: step 2/2. In terms of biological role, catalyzes the NADPH-dependent reduction of L-glutamate 5-phosphate into L-glutamate 5-semialdehyde and phosphate. The product spontaneously undergoes cyclization to form 1-pyrroline-5-carboxylate. The polypeptide is Gamma-glutamyl phosphate reductase (Haemophilus influenzae (strain ATCC 51907 / DSM 11121 / KW20 / Rd)).